The primary structure comprises 333 residues: CRISPR-associated endonuclease Cas1 (333 aa).

E162, H226, and E241 together coordinate Mn(2+).

This sequence belongs to the CRISPR-associated endonuclease Cas1 family. In terms of assembly, homodimer, forms a heterotetramer with a Cas2 homodimer. Mg(2+) is required as a cofactor. Mn(2+) serves as cofactor.

Its function is as follows. CRISPR (clustered regularly interspaced short palindromic repeat), is an adaptive immune system that provides protection against mobile genetic elements (viruses, transposable elements and conjugative plasmids). CRISPR clusters contain spacers, sequences complementary to antecedent mobile elements, and target invading nucleic acids. CRISPR clusters are transcribed and processed into CRISPR RNA (crRNA). Acts as a dsDNA endonuclease. Involved in the integration of spacer DNA into the CRISPR cassette. The sequence is that of CRISPR-associated endonuclease Cas1 from Nanoarchaeum equitans (strain Kin4-M).